Here is a 1892-residue protein sequence, read N- to C-terminus: Alpha-2-macroglobulin (1892 aa).

Residues 1 to 23 form the signal peptide; sequence MKNIFRKFVFTIFVCLINLQLIA. Positions 1441 to 1444 form a cross-link, isoglutamyl cysteine thioester (Cys-Gln); sequence CTEQ.

This sequence belongs to the protease inhibitor I39 (alpha-2-macroglobulin) family. Bacterial alpha-2-macroglobulin subfamily.

Protects the bacterial cell from host peptidases. In Rickettsia conorii (strain ATCC VR-613 / Malish 7), this protein is Alpha-2-macroglobulin.